Consider the following 184-residue polypeptide: Ribosome-recycling factor (184 aa).

This sequence belongs to the RRF family.

The protein localises to the cytoplasm. Its function is as follows. Responsible for the release of ribosomes from messenger RNA at the termination of protein biosynthesis. May increase the efficiency of translation by recycling ribosomes from one round of translation to another. In Clostridium botulinum (strain Langeland / NCTC 10281 / Type F), this protein is Ribosome-recycling factor.